Consider the following 1040-residue polypeptide: Kinesin-like protein KIN-14H (1040 aa).

The region spanning 54-176 (DLRRYEAARW…CVLALKSYRE (123 aa)) is the Calponin-homology (CH) domain. The interval 208 to 242 (SEVPVDAVTNSPSSTPSSEQPLLDQSDSNTKNDGT) is disordered. Over residues 215–242 (VTNSPSSTPSSEQPLLDQSDSNTKNDGT) the composition is skewed to polar residues. The region spanning 434–754 (SIRVYCRVRP…LKFAERVATV (321 aa)) is the Kinesin motor domain. Residue 517-524 (GQTGSGKT) coordinates ATP. Residues 761–796 (VNKDTSEVKELKEQIASLKLALARKESGADQTQLQR) adopt a coiled-coil conformation. The span at 809–818 (LGVSSSFSKS) shows a compositional bias: low complexity. Disordered regions lie at residues 809–871 (LGVS…GKEE), 887–926 (EDEITRSSKPENRAHTQLEKRTSSLKREATRGVDKNKCNS), and 969–1040 (MPRP…QNPK). Over residues 840–851 (IEGQSDSASSLD) the composition is skewed to polar residues. Positions 887-923 (EDEITRSSKPENRAHTQLEKRTSSLKREATRGVDKNK) are enriched in basic and acidic residues. The segment covering 1018–1031 (SPGQTSSRHNNSTV) has biased composition (polar residues).

It belongs to the TRAFAC class myosin-kinesin ATPase superfamily. Kinesin family. KIN-14 subfamily.

The protein is Kinesin-like protein KIN-14H of Arabidopsis thaliana (Mouse-ear cress).